The sequence spans 82 residues: Cytochrome b559 subunit alpha (82 aa).

Residues Val-22–Phe-36 traverse the membrane as a helical segment. His-24 lines the heme pocket.

Belongs to the PsbE/PsbF family. In terms of assembly, heterodimer of an alpha subunit and a beta subunit. PSII is composed of 1 copy each of membrane proteins PsbA, PsbB, PsbC, PsbD, PsbE, PsbF, PsbH, PsbI, PsbJ, PsbK, PsbL, PsbM, PsbT, PsbX, PsbY, PsbZ, Psb30/Ycf12, peripheral proteins PsbO, CyanoQ (PsbQ), PsbU, PsbV and a large number of cofactors. It forms dimeric complexes. Heme b is required as a cofactor.

The protein resides in the cellular thylakoid membrane. This b-type cytochrome is tightly associated with the reaction center of photosystem II (PSII). PSII is a light-driven water:plastoquinone oxidoreductase that uses light energy to abstract electrons from H(2)O, generating O(2) and a proton gradient subsequently used for ATP formation. It consists of a core antenna complex that captures photons, and an electron transfer chain that converts photonic excitation into a charge separation. The protein is Cytochrome b559 subunit alpha of Synechococcus sp. (strain WH7803).